The following is a 1451-amino-acid chain: Copper-transporting ATPase 2 (1451 aa).

Over 1-646 (MPEQERKVTA…KTEIKQWKKS (646 aa)) the chain is Cytoplasmic. HMA domains follow at residues 57–123 (TTGV…FEAS), 142–208 (AVVK…FEAA), and 256–322 (ATLP…PGYF). Residues Cys68, Cys71, Cys153, Cys156, Cys267, and Cys270 each coordinate Cu(+). The interval 328–353 (DGLEKESGSSSVPSLGSSQRQQEPGP) is disordered. Low complexity predominate over residues 335-345 (GSSSVPSLGSS). The 67-residue stretch at 355–421 (RTAVLTITGI…AVEDMGFEVS (67 aa)) folds into the HMA 4 domain. Phosphoserine is present on residues Ser469, Ser471, and Ser474. HMA domains are found at residues 481–547 (QKCF…FEAA) and 557–623 (GDIE…FHAS). 4 residues coordinate Cu(+): Cys492, Cys495, Cys568, and Cys571. Residues 647-668 (FLCSLVFGIPVMGLMIYMLIPS) form a helical membrane-spanning segment. At 669–690 (SKPHETMVLDHNIIPGLSVLNL) the chain is on the extracellular side. A helical membrane pass occupies residues 691-710 (IFFILCTFVQFLGGWYFYVQ). Over 711–717 (AYKSLRH) the chain is Cytoplasmic. Residues 718 to 738 (KSANMDVLIVLATTIAYAYSL) form a helical membrane-spanning segment. Over 739–757 (VILVVAIAEKAEKSPVTFF) the chain is Extracellular. Residues 758 to 778 (DTPPMLFVFIALGRWLEHVAK) form a helical membrane-spanning segment. Residues 779–912 (SKTSEALAKL…KAPIQQLADR (134 aa)) lie on the Cytoplasmic side of the membrane. Residues 913 to 935 (FSGYFVPFIIIISTLTLVVWIII) form a helical membrane-spanning segment. Over 936-965 (GFVDFGIVQKYFPSPSKHISQTEVIIRFAF) the chain is Extracellular. Residues 966–987 (QTSITVLCIACPCSLGLATPTA) form a helical membrane-spanning segment. Over 988-1310 (VMVGTGVAAQ…LSKRTVRRIR (323 aa)) the chain is Cytoplasmic. The 4-aspartylphosphate intermediate role is filled by Asp1020. Residues Asp1255 and Asp1259 each coordinate Mg(2+). The chain crosses the membrane as a helical span at residues 1311-1328 (VNLVLALIYNMVGIPIAA). Topologically, residues 1329–1339 (GVFMPIGIVLQ) are extracellular. Residues 1340-1357 (PWMGSAAASSVSVVLSSL) form a helical membrane-spanning segment. At 1358-1451 (QLKCYRKPDL…LSDRDEEQCI (94 aa)) the chain is on the cytoplasmic side. Phosphoserine is present on residues Ser1384 and Ser1443.

Belongs to the cation transport ATPase (P-type) (TC 3.A.3) family. Type IB subfamily. As to quaternary structure, monomer. Interacts with COMMD1/MURR1. Interacts with DCTN4, in a copper-dependent manner. Interacts with ATOX1. Interacts (via C-terminus) with ZBTB16/PLZF. As to expression, expressed in brain, liver, kidney, spleen and stomach. In brain, detected in neuronal cells of the hippocampal formation, olfactory bulbs, cerebellum, cerebral cortex and nuclei in the brainstem. Isoform PINA is expressed during night in adult pineal gland (pinealocytes) and retina. Isoform PINA is not detected in other tissue.

It is found in the golgi apparatus. Its subcellular location is the trans-Golgi network membrane. The protein resides in the late endosome. The catalysed reaction is Cu(+)(in) + ATP + H2O = Cu(+)(out) + ADP + phosphate + H(+). Its function is as follows. Copper ion transmembrane transporter involved in the export of copper out of the cells, such as the efflux of hepatic copper into the bile. This Rattus norvegicus (Rat) protein is Copper-transporting ATPase 2 (Atp7b).